Reading from the N-terminus, the 81-residue chain is U17-lycotoxin-Ls1a (81 aa).

The signal sequence occupies residues 1 to 22; sequence MSSKVQAVLLLVGVITFLAVHA. A propeptide spanning residues 23-34 is cleaved from the precursor; it reads QEELSENTESER. Cystine bridges form between Cys36/Cys51, Cys50/Cys67, and Cys58/Cys65.

It belongs to the neurotoxin 02 (plectoxin) family. Expressed by the venom gland.

The protein resides in the secreted. This is U17-lycotoxin-Ls1a from Lycosa singoriensis (Wolf spider).